A 466-amino-acid polypeptide reads, in one-letter code: Ras-GEF domain-containing family member 1C (466 aa).

The span at 1–23 shows a compositional bias: polar residues; that stretch reads MPQTLSASDMVTPGSLSPPTTEP. 2 disordered regions span residues 1–35 and 443–466; these read MPQT…PLLD and SESP…LGKT. The N-terminal Ras-GEF domain occupies 34-164; that stretch reads LDGAPSSASL…LLQALHQKLA (131 aa). Residues 200-446 form the Ras-GEF domain; it reads DPYTLAQQLT…YLASYESESP (247 aa).

Guanine nucleotide exchange factor (GEF). This chain is Ras-GEF domain-containing family member 1C (RASGEF1C), found in Macaca fascicularis (Crab-eating macaque).